An 88-amino-acid polypeptide reads, in one-letter code: Small ribosomal subunit protein uS15 (88 aa).

Positions methionine 1–aspartate 12 are enriched in basic and acidic residues. Residues methionine 1–proline 24 are disordered.

It belongs to the universal ribosomal protein uS15 family. Part of the 30S ribosomal subunit. Forms a bridge to the 50S subunit in the 70S ribosome, contacting the 23S rRNA.

Functionally, one of the primary rRNA binding proteins, it binds directly to 16S rRNA where it helps nucleate assembly of the platform of the 30S subunit by binding and bridging several RNA helices of the 16S rRNA. Its function is as follows. Forms an intersubunit bridge (bridge B4) with the 23S rRNA of the 50S subunit in the ribosome. This Salinibacter ruber (strain DSM 13855 / M31) protein is Small ribosomal subunit protein uS15.